The sequence spans 323 residues: DNA primase small subunit PriS (323 aa).

Active-site residues include Asp97, Asp99, and Asp274.

It belongs to the eukaryotic-type primase small subunit family. In terms of assembly, heterodimer of a small subunit (PriS) and a large subunit (PriL). Mg(2+) is required as a cofactor. Requires Mn(2+) as cofactor.

In terms of biological role, catalytic subunit of DNA primase, an RNA polymerase that catalyzes the synthesis of short RNA molecules used as primers for DNA polymerase during DNA replication. The small subunit contains the primase catalytic core and has DNA synthesis activity on its own. Binding to the large subunit stabilizes and modulates the activity, increasing the rate of DNA synthesis while decreasing the length of the DNA fragments, and conferring RNA synthesis capability. The DNA polymerase activity may enable DNA primase to also catalyze primer extension after primer synthesis. May also play a role in DNA repair. The sequence is that of DNA primase small subunit PriS from Methanothermobacter thermautotrophicus (strain ATCC 29096 / DSM 1053 / JCM 10044 / NBRC 100330 / Delta H) (Methanobacterium thermoautotrophicum).